The sequence spans 257 residues: Imidazole glycerol phosphate synthase subunit HisF (257 aa).

Catalysis depends on residues aspartate 11 and aspartate 130.

This sequence belongs to the HisA/HisF family. As to quaternary structure, heterodimer of HisH and HisF.

The protein localises to the cytoplasm. It catalyses the reaction 5-[(5-phospho-1-deoxy-D-ribulos-1-ylimino)methylamino]-1-(5-phospho-beta-D-ribosyl)imidazole-4-carboxamide + L-glutamine = D-erythro-1-(imidazol-4-yl)glycerol 3-phosphate + 5-amino-1-(5-phospho-beta-D-ribosyl)imidazole-4-carboxamide + L-glutamate + H(+). Its pathway is amino-acid biosynthesis; L-histidine biosynthesis; L-histidine from 5-phospho-alpha-D-ribose 1-diphosphate: step 5/9. Functionally, IGPS catalyzes the conversion of PRFAR and glutamine to IGP, AICAR and glutamate. The HisF subunit catalyzes the cyclization activity that produces IGP and AICAR from PRFAR using the ammonia provided by the HisH subunit. The sequence is that of Imidazole glycerol phosphate synthase subunit HisF from Shewanella piezotolerans (strain WP3 / JCM 13877).